The sequence spans 993 residues: Chromosome transmission fidelity protein 18 (993 aa).

Disordered regions lie at residues 1–52 and 65–107; these read MPFI…DHDG and FEIQ…DGLE. Composition is skewed to acidic residues over residues 42–51 and 97–106; these read LDDDDDDDHD and DNDDDDDDGL. Residue 321 to 328 participates in ATP binding; sequence GPPGLGKT. The disordered stretch occupies residues 887–915; the sequence is RKNSENLSSTGSKKSTTKSDDIETPANPA.

The protein belongs to the activator 1 small subunits family. CTF18 subfamily.

The protein resides in the nucleus. Essential for the fidelity of chromosome transmission. Required for the DNA replication block checkpoint. Replication factor C (RFC) complex has an essential but redundant activity in sister chromatid cohesion establishment. The sequence is that of Chromosome transmission fidelity protein 18 (ctf18) from Emericella nidulans (strain FGSC A4 / ATCC 38163 / CBS 112.46 / NRRL 194 / M139) (Aspergillus nidulans).